The sequence spans 168 residues: MINDILEPGLRVVFCGINPGKSSAHTGFHFAHPGNRFWKVIHLAGFTDRQLKPEEERHLLDTRCGITKLVERPTVQANEVDVKELHEGGRNLIKKIEDFQPDALAVLGKKAYEQAFSQRGVKWGKQKLKIGKTEIWVLPNPSGLNRASLDKLVEAYRELDDALVARGR.

It belongs to the uracil-DNA glycosylase (UDG) superfamily. TDG/mug family. Binds DNA as a monomer.

The protein localises to the cytoplasm. It carries out the reaction Specifically hydrolyzes mismatched double-stranded DNA and polynucleotides, releasing free uracil.. Functionally, excises ethenocytosine and uracil, which can arise by alkylation or deamination of cytosine, respectively, from the corresponding mispairs with guanine in ds-DNA. It is capable of hydrolyzing the carbon-nitrogen bond between the sugar-phosphate backbone of the DNA and the mispaired base. The complementary strand guanine functions in substrate recognition. Required for DNA damage lesion repair in stationary-phase cells. The protein is G/U mismatch-specific DNA glycosylase of Cronobacter sakazakii (strain ATCC BAA-894) (Enterobacter sakazakii).